The primary structure comprises 122 residues: Basic phospholipase A2 (122 aa).

7 disulfide bridges follow: Cys26-Cys115, Cys28-Cys44, Cys43-Cys95, Cys49-Cys122, Cys50-Cys88, Cys57-Cys81, and Cys75-Cys86. Ca(2+) contacts are provided by Tyr27, Gly29, and Gly31. His47 is an active-site residue. A Ca(2+)-binding site is contributed by Asp48. Residue Asp89 is part of the active site.

The protein belongs to the phospholipase A2 family. Group II subfamily. D49 sub-subfamily. Requires Ca(2+) as cofactor. In terms of tissue distribution, expressed by the venom gland.

It is found in the secreted. It catalyses the reaction a 1,2-diacyl-sn-glycero-3-phosphocholine + H2O = a 1-acyl-sn-glycero-3-phosphocholine + a fatty acid + H(+). Its function is as follows. Snake venom phospholipase A2 (PLA2) that does not inhibit platelet aggregation. Exhibits cytotoxic and anticoagulant activity. Induces Ehrlich tumor growth but not angiogenesis. PLA2 catalyzes the calcium-dependent hydrolysis of the 2-acyl groups in 3-sn-phosphoglycerides. The chain is Basic phospholipase A2 from Bothrops leucurus (Whitetail lancehead).